Reading from the N-terminus, the 638-residue chain is 1-deoxy-D-xylulose-5-phosphate synthase (638 aa).

Thiamine diphosphate contacts are provided by residues His81 and 122 to 124; that span reads GHS. Residue Asp153 participates in Mg(2+) binding. Thiamine diphosphate contacts are provided by residues 154–155, Asn182, Tyr293, and Glu377; that span reads GS. Residue Asn182 participates in Mg(2+) binding.

The protein belongs to the transketolase family. DXPS subfamily. As to quaternary structure, homodimer. Mg(2+) serves as cofactor. It depends on thiamine diphosphate as a cofactor.

The catalysed reaction is D-glyceraldehyde 3-phosphate + pyruvate + H(+) = 1-deoxy-D-xylulose 5-phosphate + CO2. Its pathway is metabolic intermediate biosynthesis; 1-deoxy-D-xylulose 5-phosphate biosynthesis; 1-deoxy-D-xylulose 5-phosphate from D-glyceraldehyde 3-phosphate and pyruvate: step 1/1. Its function is as follows. Catalyzes the acyloin condensation reaction between C atoms 2 and 3 of pyruvate and glyceraldehyde 3-phosphate to yield 1-deoxy-D-xylulose-5-phosphate (DXP). In Oleidesulfovibrio alaskensis (strain ATCC BAA-1058 / DSM 17464 / G20) (Desulfovibrio alaskensis), this protein is 1-deoxy-D-xylulose-5-phosphate synthase.